Consider the following 515-residue polypeptide: Putative myristoylated protein 118L (515 aa).

The N-myristoyl glycine; by host moiety is linked to residue glycine 2. 3 consecutive transmembrane segments (helical) span residues 188–208 (LSLAMIALIIVAMGLTGVGGV), 214–234 (IIFPAVLIGSIVSFVLYFQWT), and 482–502 (WLLYLAIGLLIVGVIGMAFSS).

It belongs to the IIV-6 118L/458R family.

It is found in the membrane. This Acheta domesticus (House cricket) protein is Putative myristoylated protein 118L.